Reading from the N-terminus, the 602-residue chain is Fumarate reductase flavoprotein subunit (602 aa).

FAD is bound by residues 12-16 (GAGGA), 36-38 (ISK), 44-52 (SHTVAAEGG), 156-158 (HFV), 192-193 (AT), and Asp-212. His-45 is modified (tele-8alpha-FAD histidine). Active-site residues include His-233 and Arg-249. Residues 356-357 (HY), Glu-380, and 391-397 (RLGSNSL) each bind FAD. The segment at 581–602 (YGGEADAADKAEAANKKEKANG) is disordered. Residues 587 to 602 (AADKAEAANKKEKANG) are compositionally biased toward basic and acidic residues.

Belongs to the FAD-dependent oxidoreductase 2 family. FRD/SDH subfamily. In terms of assembly, part of an enzyme complex containing four subunits: a flavoprotein (FrdA), an iron-sulfur protein (FrdB), and two hydrophobic anchor proteins (FrdC and FrdD). Can be cross-linked to SdhE. Purified from membrane fractions associated with protoporphyrinogen IX dehydrogenase (hemG). The cofactor is FAD.

The protein resides in the cell inner membrane. The enzyme catalyses a quinone + succinate = fumarate + a quinol. It catalyses the reaction a menaquinone + succinate = a menaquinol + fumarate. Inhibited by oxaloacetate, a substrate analog. Two distinct, membrane-bound, FAD-containing enzymes are responsible for the catalysis of fumarate and succinate interconversion; fumarate reductase is used during anaerobic growth, and succinate dehydrogenase is used during aerobic growth. The QFR enzyme complex binds 2 quinones in or near the membrane; 1 near the [3Fe-4S] cluster (QP is proximal to the [3Fe-4S] cluster, on the cytoplasmic side of the membrane) while QD (the distal cluster) is on the other side of the membrane. It is not clear if both of the quinol-binding sites are functionally relevant. The polypeptide is Fumarate reductase flavoprotein subunit (frdA) (Escherichia coli (strain K12)).